The following is a 505-amino-acid chain: ATP synthase subunit alpha (505 aa).

An ATP-binding site is contributed by 170-177 (GDRQTGKT).

The protein belongs to the ATPase alpha/beta chains family. As to quaternary structure, F-type ATPases have 2 components, CF(1) - the catalytic core - and CF(0) - the membrane proton channel. CF(1) has five subunits: alpha(3), beta(3), gamma(1), delta(1), epsilon(1). CF(0) has four main subunits: a(1), b(1), b'(1) and c(9-12).

It is found in the cellular thylakoid membrane. It carries out the reaction ATP + H2O + 4 H(+)(in) = ADP + phosphate + 5 H(+)(out). Produces ATP from ADP in the presence of a proton gradient across the membrane. The alpha chain is a regulatory subunit. The chain is ATP synthase subunit alpha from Synechococcus sp. (strain RCC307).